We begin with the raw amino-acid sequence, 274 residues long: Large ribosomal subunit protein uL2 (274 aa).

Disordered regions lie at residues 21 to 59 (KVGLSKDEPEKSLTSGKKSSGGRNNHGRITTRHRGGGHK) and 223 to 274 (VAMN…QLKG). Positions 32-42 (SLTSGKKSSGG) are enriched in low complexity. The segment covering 45-59 (NHGRITTRHRGGGHK) has biased composition (basic residues). Positions 263 to 274 (KSSDKYIKQLKG) are enriched in basic and acidic residues.

This sequence belongs to the universal ribosomal protein uL2 family. In terms of assembly, part of the 50S ribosomal subunit. Forms a bridge to the 30S subunit in the 70S ribosome.

Functionally, one of the primary rRNA binding proteins. Required for association of the 30S and 50S subunits to form the 70S ribosome, for tRNA binding and peptide bond formation. It has been suggested to have peptidyltransferase activity; this is somewhat controversial. Makes several contacts with the 16S rRNA in the 70S ribosome. This is Large ribosomal subunit protein uL2 from Wolbachia sp. subsp. Drosophila simulans (strain wRi).